A 192-amino-acid polypeptide reads, in one-letter code: Small ribosomal subunit protein uS5 (192 aa).

The S5 DRBM domain maps to 20-83 (FVDKLVHINR…EAAKRGLIRV (64 aa)). Positions 162 to 192 (SVAARRGLKVSALQARRRDADPADTSDAAVA) are disordered.

It belongs to the universal ribosomal protein uS5 family. In terms of assembly, part of the 30S ribosomal subunit. Contacts proteins S4 and S8.

With S4 and S12 plays an important role in translational accuracy. Its function is as follows. Located at the back of the 30S subunit body where it stabilizes the conformation of the head with respect to the body. This is Small ribosomal subunit protein uS5 from Methylorubrum populi (strain ATCC BAA-705 / NCIMB 13946 / BJ001) (Methylobacterium populi).